The primary structure comprises 354 residues: Holliday junction branch migration complex subunit RuvB (354 aa).

Positions 1-22 are disordered; that stretch reads MTLQTDDFAPAPARRVVSAAPA. A large ATPase domain (RuvB-L) region spans residues 5–194; the sequence is TDDFAPAPAR…FGIVARLEFY (190 aa). The span at 9–22 shows a compositional bias: low complexity; it reads APAPARRVVSAAPA. ATP contacts are provided by residues L33, R34, G75, K78, T79, T80, 141–143, R184, Y194, and R231; that span reads EDY. Residue T79 participates in Mg(2+) binding. The tract at residues 195–265 is small ATPAse domain (RuvB-S); sequence SAQELARIVK…IAERALAMLD (71 aa). The tract at residues 268–354 is head domain (RuvB-H); that stretch reads PEGLDVMDRK…GAQAPGLFAV (87 aa). DNA-binding residues include R323 and R328.

The protein belongs to the RuvB family. As to quaternary structure, homohexamer. Forms an RuvA(8)-RuvB(12)-Holliday junction (HJ) complex. HJ DNA is sandwiched between 2 RuvA tetramers; dsDNA enters through RuvA and exits via RuvB. An RuvB hexamer assembles on each DNA strand where it exits the tetramer. Each RuvB hexamer is contacted by two RuvA subunits (via domain III) on 2 adjacent RuvB subunits; this complex drives branch migration. In the full resolvosome a probable DNA-RuvA(4)-RuvB(12)-RuvC(2) complex forms which resolves the HJ.

It is found in the cytoplasm. It carries out the reaction ATP + H2O = ADP + phosphate + H(+). Functionally, the RuvA-RuvB-RuvC complex processes Holliday junction (HJ) DNA during genetic recombination and DNA repair, while the RuvA-RuvB complex plays an important role in the rescue of blocked DNA replication forks via replication fork reversal (RFR). RuvA specifically binds to HJ cruciform DNA, conferring on it an open structure. The RuvB hexamer acts as an ATP-dependent pump, pulling dsDNA into and through the RuvAB complex. RuvB forms 2 homohexamers on either side of HJ DNA bound by 1 or 2 RuvA tetramers; 4 subunits per hexamer contact DNA at a time. Coordinated motions by a converter formed by DNA-disengaged RuvB subunits stimulates ATP hydrolysis and nucleotide exchange. Immobilization of the converter enables RuvB to convert the ATP-contained energy into a lever motion, pulling 2 nucleotides of DNA out of the RuvA tetramer per ATP hydrolyzed, thus driving DNA branch migration. The RuvB motors rotate together with the DNA substrate, which together with the progressing nucleotide cycle form the mechanistic basis for DNA recombination by continuous HJ branch migration. Branch migration allows RuvC to scan DNA until it finds its consensus sequence, where it cleaves and resolves cruciform DNA. The polypeptide is Holliday junction branch migration complex subunit RuvB (Verminephrobacter eiseniae (strain EF01-2)).